Reading from the N-terminus, the 1155-residue chain is MKTIKPLPEGVRHSMRSGIIMFDMARVVEELVFNSLDAGATKVSIFVGVVSCSVKVVDDGSGVSRDDLVLLGERYATSKFHDFTNVETASETFGFRGEALASISDISLLEVRTKAIGRPNGYRKVMKGSKCLHLGIDDDRKDSGTTVTVRDLFYSQPVRRKYMQSSPKKVLESIKKCVFRIALVHSNVSFSVLDIESDEELFQTNPSSSAFSLLMRDAGTEAVNSLCKVNVTDGMLNVSGFECADDWKPTDGQQTGRRNRLQSNPGYILCIACPRRLYEFSFEPSKTHVEFKKWGPVLAFIERITLANWKKDRILELFDGGADILAKGDRQDLIDDKIRLQNGSLFSILHFLDADWPEAMEPAKKKLKRSNDHAPCSSLLFPSADFKQDGDYFSPRKDVWSPECEVELKIQNPKEQGTVAGFESRTDSLLQSRDIEMQTNEDFPQVTDLLETSLVADSKCRKQFLTRCQITTPVNINHDFMKDSDVLNFQFQGLKDELDVSNCIGKHLLRGCSSRVSLTFHEPKLSHVEGYESVVPMIPNEKQSSPRVLETREGGSYCDVYSDKTPDCSLGSSWQDTDWFTPQCSSDRGCVGIGEDFNITPIDTAEFDSYDEKVGSKKYLSSVNVGSSVTGSFCLSSEWSPMYSTPSATKWESEYQKGCRILEQSLRLGRMPDPEFCFSAANNIKFDHEVIPEMDCCETGTDSFTAIQNCTQLADKICKSSWGHADDVRIDQYSIRKEKFSYMDGTQNNAGKQRSKRSRSAPPFYREKKRFISLSCKSDTKPKNSDPSEPDDLECLTQPCNASQMHLKCSILDDVSYDHIQETEKRLSSASDLKASAGCRTVHSETQDEDVHEDFSSEEFLDPIKSTTKWRHNCAVSQVPKESHELHGQDGVFDISSGLLHLRSDESLVPESINRHSLEDAKVLQQVDKKYIPIVACGTVAIVDQHAADERIRLEELRTKVLAGKARTVTYLSADQELVLPEMGYQLLQSYSEQIRDWGWICNITVEGSTSFKKNMSIIQRKPTPITLNAVPCILGVNLSDVDLLEFLQQLADTDGSSTIPPSVLRVLNSKACRGAIMFGDSLLPSECSLIIDGLKQTSLCFQCAHGRPTTVPLVDLKALHKQIAKLSGRQVWHGLQRREITLDRAKSRLDNAKS.

Belongs to the DNA mismatch repair MutL/HexB family. As to quaternary structure, heterodimer of MLH1 and MLH3, called MutLbeta, which is involved in correction of a specific subset of IDLs when associated with MutSbeta. In terms of tissue distribution, expressed in reproductive tissues.

It localises to the nucleus. Functionally, involved in DNA mismatch repair (MMR), correcting insertion-deletion loops (IDLs) resulting from DNA replication, DNA damage or from recombination events between non-identical sequences during meiosis. Component of the MutLbeta heterodimer, which probably forms a ternary complex with the MutSbeta heterodimer that initially recognizes the DNA mismatches. This complex is thought to be responsible for directing the downstream MMR events, including strand discrimination, excision, and resynthesis. Plays a major role in promoting meiotic crossing-over and is involved in maintaining the genetic stability of simple sequence repeats by correction of frameshift intermediates. In Arabidopsis thaliana (Mouse-ear cress), this protein is DNA mismatch repair protein MLH3 (MLH3).